A 343-amino-acid chain; its full sequence is Holliday junction branch migration complex subunit RuvB (343 aa).

Residues 1 to 20 (MEEMASRMISGDPELGEPFQ) are disordered. Positions 1-185 (MEEMASRMIS…FGILARMQFY (185 aa)) are large ATPase domain (RuvB-L). ATP is bound by residues Leu24, Arg25, Gly66, Lys69, Thr70, Thr71, 132 to 134 (EDF), Arg175, Tyr185, and Arg222. Mg(2+) is bound at residue Thr70. A small ATPAse domain (RuvB-S) region spans residues 186–256 (EPDELQQIVT…LADRALLALE (71 aa)). The segment at 259–343 (RNGLDNMDHR…PRPVQQGTLL (85 aa)) is head domain (RuvB-H). DNA contacts are provided by Arg295, Arg314, and Arg319.

It belongs to the RuvB family. In terms of assembly, homohexamer. Forms an RuvA(8)-RuvB(12)-Holliday junction (HJ) complex. HJ DNA is sandwiched between 2 RuvA tetramers; dsDNA enters through RuvA and exits via RuvB. An RuvB hexamer assembles on each DNA strand where it exits the tetramer. Each RuvB hexamer is contacted by two RuvA subunits (via domain III) on 2 adjacent RuvB subunits; this complex drives branch migration. In the full resolvosome a probable DNA-RuvA(4)-RuvB(12)-RuvC(2) complex forms which resolves the HJ.

The protein resides in the cytoplasm. It catalyses the reaction ATP + H2O = ADP + phosphate + H(+). The RuvA-RuvB-RuvC complex processes Holliday junction (HJ) DNA during genetic recombination and DNA repair, while the RuvA-RuvB complex plays an important role in the rescue of blocked DNA replication forks via replication fork reversal (RFR). RuvA specifically binds to HJ cruciform DNA, conferring on it an open structure. The RuvB hexamer acts as an ATP-dependent pump, pulling dsDNA into and through the RuvAB complex. RuvB forms 2 homohexamers on either side of HJ DNA bound by 1 or 2 RuvA tetramers; 4 subunits per hexamer contact DNA at a time. Coordinated motions by a converter formed by DNA-disengaged RuvB subunits stimulates ATP hydrolysis and nucleotide exchange. Immobilization of the converter enables RuvB to convert the ATP-contained energy into a lever motion, pulling 2 nucleotides of DNA out of the RuvA tetramer per ATP hydrolyzed, thus driving DNA branch migration. The RuvB motors rotate together with the DNA substrate, which together with the progressing nucleotide cycle form the mechanistic basis for DNA recombination by continuous HJ branch migration. Branch migration allows RuvC to scan DNA until it finds its consensus sequence, where it cleaves and resolves cruciform DNA. This is Holliday junction branch migration complex subunit RuvB from Magnetococcus marinus (strain ATCC BAA-1437 / JCM 17883 / MC-1).